The primary structure comprises 532 residues: KICSTOR complex protein ITFG2 (532 aa).

One copy of the FG-GAP 1; atypical repeat lies at 19–48 (FPHAICLGDVDNDTLNELVVGDTSGKLSVY). Position 104 is a phosphoserine (serine 104). The stretch at 126 to 155 (NTKVMLISDIDGDGRCELVVGYTDRVVRAF) is one FG-GAP 2; atypical repeat. The disordered stretch occupies residues 248 to 271 (PHPQQERLHSPHRQHQASHSPDSS).

As to quaternary structure, part of the KICSTOR complex composed of KPTN, ITFG2, KICS2 and SZT2. SZT2 probably serves as a link between the other three proteins in the KICSTOR complex and may mediate the direct interaction with the GATOR complex via GATOR1. The KICSTOR complex interacts directly with the GATOR1 complex and most probably indirectly with the GATOR2 complex in an amino acid-independent manner.

It localises to the lysosome membrane. In terms of biological role, as part of the KICSTOR complex functions in the amino acid-sensing branch of the TORC1 signaling pathway. Recruits, in an amino acid-independent manner, the GATOR1 complex to the lysosomal membranes and allows its interaction with GATOR2 and the RAG GTPases. Functions upstream of the RAG GTPases and is required to negatively regulate mTORC1 signaling in absence of amino acids. In absence of the KICSTOR complex mTORC1 is constitutively localized to the lysosome and activated. The KICSTOR complex is also probably involved in the regulation of mTORC1 by glucose. This is KICSTOR complex protein ITFG2 from Bos taurus (Bovine).